The chain runs to 187 residues: Probable cobalt-precorrin-6B C(15)-methyltransferase (decarboxylating) (187 aa).

Residues T15, 39–43, E60, and A89 each bind S-adenosyl-L-methionine; that span reads GSCTG.

This sequence belongs to the methyltransferase superfamily. Archaeal-type CbiT family.

The enzyme catalyses Co-precorrin-6B + S-adenosyl-L-methionine = Co-precorrin-7 + S-adenosyl-L-homocysteine + CO2. It functions in the pathway cofactor biosynthesis; adenosylcobalamin biosynthesis; cob(II)yrinate a,c-diamide from sirohydrochlorin (anaerobic route): step 8/10. In terms of biological role, catalyzes the methylation of C-15 in cobalt-precorrin-6B followed by the decarboxylation of C-12 to form cobalt-precorrin-7. This Halobacterium salinarum (strain ATCC 700922 / JCM 11081 / NRC-1) (Halobacterium halobium) protein is Probable cobalt-precorrin-6B C(15)-methyltransferase (decarboxylating).